Reading from the N-terminus, the 230-residue chain is Sugar fermentation stimulation protein homolog (230 aa).

This sequence belongs to the SfsA family.

The protein is Sugar fermentation stimulation protein homolog of Clostridium acetobutylicum (strain ATCC 824 / DSM 792 / JCM 1419 / IAM 19013 / LMG 5710 / NBRC 13948 / NRRL B-527 / VKM B-1787 / 2291 / W).